A 517-amino-acid chain; its full sequence is Serine hydroxymethyltransferase 2, mitochondrial (517 aa).

The transit peptide at 1 to 31 (MAMASALRRLSSSSNKPLQRLFNGGHLYSMS) directs the protein to the mitochondrion. K287 bears the N6-(pyridoxal phosphate)lysine mark.

It belongs to the SHMT family. Homotetramer. The cofactor is pyridoxal 5'-phosphate.

It is found in the mitochondrion. It catalyses the reaction (6R)-5,10-methylene-5,6,7,8-tetrahydrofolate + glycine + H2O = (6S)-5,6,7,8-tetrahydrofolate + L-serine. It participates in one-carbon metabolism; tetrahydrofolate interconversion. In terms of biological role, catalyzes the interconversion of serine and glycine. The polypeptide is Serine hydroxymethyltransferase 2, mitochondrial (Flaveria pringlei).